We begin with the raw amino-acid sequence, 211 residues long: Pyridoxine/pyridoxamine 5'-phosphate oxidase (211 aa).

Substrate contacts are provided by residues 7–10 (RREY) and lysine 65. FMN contacts are provided by residues 60–65 (RIVLLK), 75–76 (YT), arginine 81, lysine 82, and glutamine 104. Substrate-binding residues include tyrosine 122, arginine 126, and serine 130. Residues 139 to 140 (QS) and tryptophan 184 contribute to the FMN site. 190 to 192 (RLH) is a binding site for substrate. Arginine 194 is a binding site for FMN.

Belongs to the pyridoxamine 5'-phosphate oxidase family. As to quaternary structure, homodimer. The cofactor is FMN.

It catalyses the reaction pyridoxamine 5'-phosphate + O2 + H2O = pyridoxal 5'-phosphate + H2O2 + NH4(+). It carries out the reaction pyridoxine 5'-phosphate + O2 = pyridoxal 5'-phosphate + H2O2. The protein operates within cofactor metabolism; pyridoxal 5'-phosphate salvage; pyridoxal 5'-phosphate from pyridoxamine 5'-phosphate: step 1/1. Its pathway is cofactor metabolism; pyridoxal 5'-phosphate salvage; pyridoxal 5'-phosphate from pyridoxine 5'-phosphate: step 1/1. In terms of biological role, catalyzes the oxidation of either pyridoxine 5'-phosphate (PNP) or pyridoxamine 5'-phosphate (PMP) into pyridoxal 5'-phosphate (PLP). This Vibrio atlanticus (strain LGP32) (Vibrio splendidus (strain Mel32)) protein is Pyridoxine/pyridoxamine 5'-phosphate oxidase.